The sequence spans 107 residues: Large ribosomal subunit protein uL18c (107 aa).

Belongs to the universal ribosomal protein uL18 family. In terms of assembly, part of the 50S ribosomal subunit; contacts the 5S rRNA.

The protein resides in the plastid. It is found in the chloroplast. In terms of biological role, binds 5S rRNA, forms part of the central protuberance of the 50S subunit. The polypeptide is Large ribosomal subunit protein uL18c (rpl18) (Guillardia theta (Cryptophyte)).